Reading from the N-terminus, the 474-residue chain is MAGKTLYDKLWDMHLVKQRDDGSALIYIDRHILHEVTSPQAFEGLRLAGRKPWRIDANIATPDHNVPTTRTERKGGLAAIADEVSRLQVQTLDENCDDFGITEFKMNDVRQGIVHVVGPEQGATLPGMTVVCGDSHTSTHGAFGALAHGIGTSEVEHVLATQCLVAKKMKNMLVKVEGKLPAGVTAKDIVLAVIGRIGTAGGNGHAIEFAGSAIRDLSIEGRMTICNMSIEAGARVGLVAVDQKTIDYVKGRPFAPSAEQWEQAVACWQGLVSDADARFDTVVELDAAQIKPQVSWGTSPEMVLAVDQNVPDPARESDPIKRGSIERALKYMGLQPNQAITDIQLDRVFIGSCTNSRIEDLRAAAEVARGRKVAATIKQALVVPGSGLVKEQAEKEGLDRIFIEAGFEWREPGCSMCLAMNPDRLESGEHCASTSNRNFEGRQGAGGRTHLVSPAMAAAAAVNGRFIDVRELLA.

[4Fe-4S] cluster contacts are provided by Cys-353, Cys-414, and Cys-417.

This sequence belongs to the aconitase/IPM isomerase family. LeuC type 1 subfamily. In terms of assembly, heterodimer of LeuC and LeuD. [4Fe-4S] cluster is required as a cofactor.

The catalysed reaction is (2R,3S)-3-isopropylmalate = (2S)-2-isopropylmalate. Its pathway is amino-acid biosynthesis; L-leucine biosynthesis; L-leucine from 3-methyl-2-oxobutanoate: step 2/4. Its function is as follows. Catalyzes the isomerization between 2-isopropylmalate and 3-isopropylmalate, via the formation of 2-isopropylmaleate. This chain is 3-isopropylmalate dehydratase large subunit, found in Pseudomonas paraeruginosa (strain DSM 24068 / PA7) (Pseudomonas aeruginosa (strain PA7)).